The following is a 95-amino-acid chain: Acylphosphatase (95 aa).

The Acylphosphatase-like domain occupies 8–95 (RAKILVRGKV…GNFRTFEIKK (88 aa)). Active-site residues include R23 and N41.

This sequence belongs to the acylphosphatase family.

The enzyme catalyses an acyl phosphate + H2O = a carboxylate + phosphate + H(+). This Leptospira interrogans serogroup Icterohaemorrhagiae serovar copenhageni (strain Fiocruz L1-130) protein is Acylphosphatase (acyP).